The sequence spans 616 residues: Proline--tRNA ligase (616 aa).

It belongs to the class-II aminoacyl-tRNA synthetase family. ProS type 1 subfamily. Homodimer.

It localises to the cytoplasm. The catalysed reaction is tRNA(Pro) + L-proline + ATP = L-prolyl-tRNA(Pro) + AMP + diphosphate. Functionally, catalyzes the attachment of proline to tRNA(Pro) in a two-step reaction: proline is first activated by ATP to form Pro-AMP and then transferred to the acceptor end of tRNA(Pro). As ProRS can inadvertently accommodate and process non-cognate amino acids such as alanine and cysteine, to avoid such errors it has two additional distinct editing activities against alanine. One activity is designated as 'pretransfer' editing and involves the tRNA(Pro)-independent hydrolysis of activated Ala-AMP. The other activity is designated 'posttransfer' editing and involves deacylation of mischarged Ala-tRNA(Pro). The misacylated Cys-tRNA(Pro) is not edited by ProRS. This chain is Proline--tRNA ligase, found in Lactococcus lactis subsp. cremoris (strain MG1363).